The sequence spans 305 residues: Ornithine carbamoyltransferase (305 aa).

Carbamoyl phosphate is bound by residues 47–50 (STRT), Arg-98, and 125–128 (HPCQ). Residues Asn-156, Asp-221, and 225-226 (SM) each bind L-ornithine. Residues 262 to 263 (CL) and Arg-290 contribute to the carbamoyl phosphate site.

It belongs to the aspartate/ornithine carbamoyltransferase superfamily. OTCase family.

The protein resides in the cytoplasm. It carries out the reaction carbamoyl phosphate + L-ornithine = L-citrulline + phosphate + H(+). It functions in the pathway amino-acid biosynthesis; L-arginine biosynthesis; L-arginine from L-ornithine and carbamoyl phosphate: step 1/3. In terms of biological role, reversibly catalyzes the transfer of the carbamoyl group from carbamoyl phosphate (CP) to the N(epsilon) atom of ornithine (ORN) to produce L-citrulline. In Methanococcus vannielii (strain ATCC 35089 / DSM 1224 / JCM 13029 / OCM 148 / SB), this protein is Ornithine carbamoyltransferase.